Reading from the N-terminus, the 470-residue chain is Metalloreductase STEAP4 (470 aa).

Residues 27-30 (TGDF), 49-50 (SR), Tyr-67, 81-85 (MHREH), Asn-106, and Ala-139 contribute to the NADP(+) site. FAD contacts are provided by Trp-140 and Asp-148. Arg-171 is a binding site for NADP(+). Helical transmembrane passes span 202–224 (FPFY…REVI) and 236–256 (YRLA…ILLA). Tyr-217 serves as a coordination point for Fe(3+). Positions 247 to 395 (FPITALILLA…LGYLTLVLCT (149 aa)) constitute a Ferric oxidoreductase domain. FAD-binding residues include Gln-269 and Arg-290. 2 helical membrane passes run 293–313 (LGLV…VIPI) and 342–362 (AWIN…FLLL). Residue His-304 participates in heme b binding. Residue Tyr-307 participates in Fe(3+) binding. The FAD site is built by Ser-366 and Gln-383. 2 helical membrane-spanning segments follow: residues 381–401 (FVQS…TLVY) and 419–439 (AYIL…ILIM). A heme b-binding site is contributed by His-397.

This sequence belongs to the STEAP family. In terms of assembly, homotrimer. Interacts with PTK2/FAK1; the interaction may regulate PTK2 phosphorylation. It depends on FAD as a cofactor. The cofactor is heme b. In terms of tissue distribution, expressed in white and brown adipose tissues cells, as well as in muscle and liver cells. Detected in joints and spleens of arthritic mice.

The protein localises to the cell membrane. It localises to the golgi apparatus membrane. It is found in the early endosome membrane. The catalysed reaction is 2 Fe(2+) + NADP(+) + H(+) = 2 Fe(3+) + NADPH. The enzyme catalyses 2 Cu(+) + NADP(+) + H(+) = 2 Cu(2+) + NADPH. Integral membrane protein that functions as a NADPH-dependent ferric-chelate reductase, using NADPH from one side of the membrane to reduce a Fe(3+) chelate that is bound on the other side of the membrane. Mediates sequential transmembrane electron transfer from NADPH to FAD and onto heme, and finally to the Fe(3+) chelate. Can also reduce Cu(2+) to Cu(1+). Plays a role in systemic metabolic homeostasis, integrating inflammatory and metabolic responses. Associated with obesity and insulin-resistance. Involved in inflammatory arthritis, through the regulation of inflammatory cytokines. Inhibits anchorage-independent cell proliferation. This Mus musculus (Mouse) protein is Metalloreductase STEAP4 (Steap4).